Here is a 439-residue protein sequence, read N- to C-terminus: tRNA-2-methylthio-N(6)-dimethylallyladenosine synthase (439 aa).

Positions 5-121 (KKLFIKTYGC…LPELEAKTRA (117 aa)) constitute an MTTase N-terminal domain. Residues Cys14, Cys50, Cys84, Cys159, Cys163, and Cys166 each coordinate [4Fe-4S] cluster. Residues 145-378 (AKRGPTAFLT…ITRHQREIQD (234 aa)) form the Radical SAM core domain. In terms of domain architecture, TRAM spans 378 to 439 (DGMVGREVSV…GANSLAGELA (62 aa)).

This sequence belongs to the methylthiotransferase family. MiaB subfamily. Monomer. The cofactor is [4Fe-4S] cluster.

It localises to the cytoplasm. It carries out the reaction N(6)-dimethylallyladenosine(37) in tRNA + (sulfur carrier)-SH + AH2 + 2 S-adenosyl-L-methionine = 2-methylsulfanyl-N(6)-dimethylallyladenosine(37) in tRNA + (sulfur carrier)-H + 5'-deoxyadenosine + L-methionine + A + S-adenosyl-L-homocysteine + 2 H(+). Catalyzes the methylthiolation of N6-(dimethylallyl)adenosine (i(6)A), leading to the formation of 2-methylthio-N6-(dimethylallyl)adenosine (ms(2)i(6)A) at position 37 in tRNAs that read codons beginning with uridine. In Ruegeria pomeroyi (strain ATCC 700808 / DSM 15171 / DSS-3) (Silicibacter pomeroyi), this protein is tRNA-2-methylthio-N(6)-dimethylallyladenosine synthase.